Here is a 239-residue protein sequence, read N- to C-terminus: tRNA (guanine-N(1)-)-methyltransferase (239 aa).

Residues glycine 115 and 134–139 contribute to the S-adenosyl-L-methionine site; that span reads MGDFVL. The interval 210–239 is disordered; it reads QQQREQRTQERRPDLWNRWQQIQNPTPPAP. Residues 211-224 are compositionally biased toward basic and acidic residues; the sequence is QQREQRTQERRPDL.

This sequence belongs to the RNA methyltransferase TrmD family. In terms of assembly, homodimer.

The protein resides in the cytoplasm. The enzyme catalyses guanosine(37) in tRNA + S-adenosyl-L-methionine = N(1)-methylguanosine(37) in tRNA + S-adenosyl-L-homocysteine + H(+). Functionally, specifically methylates guanosine-37 in various tRNAs. The polypeptide is tRNA (guanine-N(1)-)-methyltransferase (Synechococcus sp. (strain CC9311)).